Reading from the N-terminus, the 346-residue chain is ATP-dependent (S)-NAD(P)H-hydrate dehydratase 2 (346 aa).

Positions 1 to 20 are disordered; the sequence is MMVHSPLATGPHPTTHLEPT. The YjeF C-terminal domain occupies 28–339; sequence LLRKAFQMIP…GYIGEAFEQV (312 aa). Residues Gly-135 and 188 to 194 each bind (6S)-NADPHX; that span reads NHVEFQR. Residues 228–232 and 248–257 each bind ATP; these read KGSID and GSPKRCGGQG. Residue Asp-258 participates in (6S)-NADPHX binding.

The protein belongs to the NnrD/CARKD family. It depends on Mg(2+) as a cofactor.

It localises to the cytoplasm. It carries out the reaction (6S)-NADHX + ATP = ADP + phosphate + NADH + H(+). It catalyses the reaction (6S)-NADPHX + ATP = ADP + phosphate + NADPH + H(+). Its function is as follows. Catalyzes the dehydration of the S-form of NAD(P)HX at the expense of ATP, which is converted to ADP. Together with NAD(P)HX epimerase, which catalyzes the epimerization of the S- and R-forms, the enzyme allows the repair of both epimers of NAD(P)HX, a damaged form of NAD(P)H that is a result of enzymatic or heat-dependent hydration. The sequence is that of ATP-dependent (S)-NAD(P)H-hydrate dehydratase 2 from Puccinia graminis f. sp. tritici (strain CRL 75-36-700-3 / race SCCL) (Black stem rust fungus).